Here is a 461-residue protein sequence, read N- to C-terminus: Tubulin gamma-1 chain (461 aa).

142-148 provides a ligand contact to GTP; sequence AGGTGSG.

Belongs to the tubulin family.

Its subcellular location is the cytoplasm. The protein localises to the cytoskeleton. The protein resides in the microtubule organizing center. It is found in the centrosome. Its function is as follows. Tubulin is the major constituent of microtubules. The gamma chain is found at microtubule organizing centers (MTOC) such as the spindle poles or the centrosome, suggesting that it is involved in the minus-end nucleation of microtubule assembly. In Euplotoides octocarinatus (Freshwater ciliate), this protein is Tubulin gamma-1 chain.